A 356-amino-acid chain; its full sequence is MQTLHALLRDIPAPDAEAMARAQQHIDGLLKPPGSLGRLEALAVQLAGMPGLNGTPQVGEKAMLVMCADHGVWDEGVAVSPKIVTAIQAANMTRGTTGVCVLAAQAGAKVHVIDVGIDAEPIPGVVDMRVARGCGNIAVGPAMSRSQAEALLLEVSRYTCDLAQRGVTLFGVGELGMANTTPAAAMVSVFTGSDAKEVVGIGANLPPSRIDNKVDVVRRAIAINQPNPRDGIDVLSKVGGFDLVGMTGVMLGAARCGLPVLLDGFLSYSAALAACQIAPAVRPYLIPSHFSAEKGARIALAHLSMEPYLHMAMRLGEGSGAALAMPIVEAACAMFHNMGELAASNIVLPEGNANAT.

Glutamate 317 (proton acceptor) is an active-site residue.

The protein belongs to the CobT family. In terms of assembly, homodimer.

It carries out the reaction 5,6-dimethylbenzimidazole + nicotinate beta-D-ribonucleotide = alpha-ribazole 5'-phosphate + nicotinate + H(+). The protein operates within nucleoside biosynthesis; alpha-ribazole biosynthesis; alpha-ribazole from 5,6-dimethylbenzimidazole: step 1/2. In terms of biological role, catalyzes the synthesis of alpha-ribazole-5'-phosphate from nicotinate mononucleotide (NAMN) and 5,6-dimethylbenzimidazole (DMB). This chain is Nicotinate-nucleotide--dimethylbenzimidazole phosphoribosyltransferase, found in Salmonella schwarzengrund (strain CVM19633).